The primary structure comprises 81 residues: Exodeoxyribonuclease 7 small subunit (81 aa).

Belongs to the XseB family. Heterooligomer composed of large and small subunits.

The protein resides in the cytoplasm. The enzyme catalyses Exonucleolytic cleavage in either 5'- to 3'- or 3'- to 5'-direction to yield nucleoside 5'-phosphates.. In terms of biological role, bidirectionally degrades single-stranded DNA into large acid-insoluble oligonucleotides, which are then degraded further into small acid-soluble oligonucleotides. The polypeptide is Exodeoxyribonuclease 7 small subunit (Paramagnetospirillum magneticum (strain ATCC 700264 / AMB-1) (Magnetospirillum magneticum)).